The primary structure comprises 392 residues: Arogenate dehydratase/prephenate dehydratase 1, chloroplastic (392 aa).

The transit peptide at 1–48 (MALRCFPIWVCPQTTHHRSPLMGLAEFDADKRRRFCLWECSSSASQRA) directs the protein to the chloroplast. In terms of domain architecture, Prephenate dehydratase spans 107–282 (RISFQGIPGA…NVTRFLILAR (176 aa)). The region spanning 296–387 (SIVFSLEEGP…SFIRILGCYP (92 aa)) is the ACT domain.

In terms of tissue distribution, expressed in roots, leaves, stems, flowers and siliques.

It localises to the plastid. It is found in the chloroplast stroma. The catalysed reaction is L-arogenate + H(+) = L-phenylalanine + CO2 + H2O. The enzyme catalyses prephenate + H(+) = 3-phenylpyruvate + CO2 + H2O. The protein operates within amino-acid biosynthesis; L-phenylalanine biosynthesis; L-phenylalanine from L-arogenate: step 1/1. It participates in amino-acid biosynthesis; L-phenylalanine biosynthesis; phenylpyruvate from prephenate: step 1/1. Its function is as follows. Converts the prephenate produced from the shikimate-chorismate pathway into phenylalanine. Dehydratase that uses arogenate and prephenate as substrates. Utilzes more efficiently arogenate than prephenate. The protein is Arogenate dehydratase/prephenate dehydratase 1, chloroplastic of Arabidopsis thaliana (Mouse-ear cress).